Here is a 381-residue protein sequence, read N- to C-terminus: 4-hydroxy-3-methylbut-2-en-1-yl diphosphate synthase (flavodoxin) (381 aa).

C273, C276, C308, and E315 together coordinate [4Fe-4S] cluster.

Belongs to the IspG family. The cofactor is [4Fe-4S] cluster.

The enzyme catalyses (2E)-4-hydroxy-3-methylbut-2-enyl diphosphate + oxidized [flavodoxin] + H2O + 2 H(+) = 2-C-methyl-D-erythritol 2,4-cyclic diphosphate + reduced [flavodoxin]. Its pathway is isoprenoid biosynthesis; isopentenyl diphosphate biosynthesis via DXP pathway; isopentenyl diphosphate from 1-deoxy-D-xylulose 5-phosphate: step 5/6. In terms of biological role, converts 2C-methyl-D-erythritol 2,4-cyclodiphosphate (ME-2,4cPP) into 1-hydroxy-2-methyl-2-(E)-butenyl 4-diphosphate. This chain is 4-hydroxy-3-methylbut-2-en-1-yl diphosphate synthase (flavodoxin), found in Gluconobacter oxydans (strain 621H) (Gluconobacter suboxydans).